The primary structure comprises 335 residues: Heme A synthase (335 aa).

The next 8 helical transmembrane spans lie at 9-29 (VAIWLFLCSIMIVLMVGIGGF), 90-110 (YVHRLFARLTGLIFILPFIYF), 120-140 (VVIRLSIALSFGVLQAFTGWY), 156-176 (MLTLHLLLALVIFALLSYQFF), 197-217 (VGIILILIVVQIIFGAFVAGL), 255-275 (VQFIHRTLALLILVLTTVLTI), 283-303 (VYVMLLSVIIQIILGVVTLLL), and 309-329 (IAISHQMFSFILFGSGLCFLC). Histidine 259 is a heme binding site. Position 313 (histidine 313) interacts with heme.

Belongs to the COX15/CtaA family. Type 2 subfamily. As to quaternary structure, interacts with CtaB. The cofactor is heme b.

It is found in the cell membrane. The catalysed reaction is Fe(II)-heme o + 2 A + H2O = Fe(II)-heme a + 2 AH2. It participates in porphyrin-containing compound metabolism; heme A biosynthesis; heme A from heme O: step 1/1. In terms of biological role, catalyzes the conversion of heme O to heme A by two successive hydroxylations of the methyl group at C8. The first hydroxylation forms heme I, the second hydroxylation results in an unstable dihydroxymethyl group, which spontaneously dehydrates, resulting in the formyl group of heme A. This Wolbachia sp. subsp. Brugia malayi (strain TRS) protein is Heme A synthase.